A 226-amino-acid chain; its full sequence is Small ribosomal subunit protein uS2c (226 aa).

Belongs to the universal ribosomal protein uS2 family.

It localises to the plastid. The protein localises to the chloroplast. The sequence is that of Small ribosomal subunit protein uS2c (rps2) from Phaeodactylum tricornutum (strain CCAP 1055/1).